A 438-amino-acid polypeptide reads, in one-letter code: Glutaryl-CoA dehydrogenase, mitochondrial (438 aa).

The transit peptide at 1–44 (MALRGVYAQLLNRGPGLRVFRSWSSATAQTEKGEKTQSRSAKPS) directs the protein to the mitochondrion. Substrate is bound by residues 138–139 (RS) and Ser-186. Residues 177-186 (FGLTEPNHGS), Ser-186, and 212-214 (WIT) each bind FAD. N6-acetyllysine is present on Lys-240. Substrate is bound at residue 287–294 (FGCLNNAR). Residues Arg-319, Gln-330, and 387–391 (DMLGG) each bind FAD. The active-site Proton acceptor is the Glu-414. Gly-415 is a substrate binding site. Residues Thr-416, 416 to 418 (THD), and Phe-434 contribute to the FAD site.

It belongs to the acyl-CoA dehydrogenase family. As to quaternary structure, homotetramer. FAD is required as a cofactor.

The protein resides in the mitochondrion matrix. It catalyses the reaction glutaryl-CoA + oxidized [electron-transfer flavoprotein] + 2 H(+) = (2E)-butenoyl-CoA + reduced [electron-transfer flavoprotein] + CO2. It functions in the pathway amino-acid metabolism; lysine degradation. It participates in amino-acid metabolism; tryptophan metabolism. Its function is as follows. Catalyzes the oxidative decarboxylation of glutaryl-CoA to crotonyl-CoA and CO(2) in the degradative pathway of L-lysine, L-hydroxylysine, and L-tryptophan metabolism. It uses electron transfer flavoprotein as its electron acceptor. The chain is Glutaryl-CoA dehydrogenase, mitochondrial (GCDH) from Bos taurus (Bovine).